Here is a 171-residue protein sequence, read N- to C-terminus: Co-chaperone protein HscB (171 aa).

The J domain occupies 2–74 (DYFTFFGLPA…LMRAEYLLSL (73 aa)).

This sequence belongs to the HscB family. In terms of assembly, interacts with HscA and stimulates its ATPase activity. Interacts with IscU.

Its function is as follows. Co-chaperone involved in the maturation of iron-sulfur cluster-containing proteins. Seems to help targeting proteins to be folded toward HscA. The chain is Co-chaperone protein HscB from Shigella sonnei (strain Ss046).